The chain runs to 271 residues: Plasmanylethanolamine desaturase 1 (271 aa).

Residues 1–25 are disordered; the sequence is MAGAEDAPGRQPELDEDETAEGRRW. A run of 3 helical transmembrane segments spans residues 48-68, 75-95, and 166-186; these read WCSV…LLLL, PLVI…SGLV, and LYPW…TNQI. Residues 187-191 carry the Histidine box-1 motif; it reads HKWSH. Positions 214–218 match the Histidine box-2 motif; that stretch reads HHRIH.

It belongs to the fatty acid desaturase CarF family.

It is found in the endoplasmic reticulum membrane. The catalysed reaction is a 1-(1,2-saturated alkyl)-2-acyl-sn-glycero-3-phosphoethanolamine + 2 Fe(II)-[cytochrome b5] + O2 + 2 H(+) = a 1-O-(1Z-alkenyl)-2-acyl-sn-glycero-3-phosphoethanolamine + 2 Fe(III)-[cytochrome b5] + 2 H2O. The enzyme catalyses a 1-O-hexadecyl-2-acyl-sn-glycero-3-phosphoethanolamine + 2 Fe(II)-[cytochrome b5] + O2 + 2 H(+) = a 1-O-(1Z-hexadecenyl)-2-acyl-sn-glycero-3-phosphoethanolamine + 2 Fe(III)-[cytochrome b5] + 2 H2O. It carries out the reaction a 1-O-octadecyl-2-acyl-sn-glycero-3-phosphoethanolamine + 2 Fe(II)-[cytochrome b5] + O2 + 2 H(+) = a 1-O-(1Z-octadecenyl)-2-acyl-sn-glycero-3-phosphoethanolamine + 2 Fe(III)-[cytochrome b5] + 2 H2O. It catalyses the reaction a 1-O-(9Z-octadecenyl)-2-acyl-sn-glycero-3-phosphoethanolamine + 2 Fe(II)-[cytochrome b5] + O2 + 2 H(+) = a 1-O-(1Z,9Z-octadecadienyl)-2-acyl-sn-glycero-3-phosphoethanolamine + 2 Fe(III)-[cytochrome b5] + 2 H2O. The protein operates within lipid metabolism; fatty acid metabolism. Plasmanylethanolamine desaturase involved in plasmalogen biogenesis in the endoplasmic reticulum membrane. Plasmalogens are glycerophospholipids with a hydrocarbon chain linked by a vinyl ether bond at the glycerol sn-1 position, and are involved in antioxidative and signaling mechanisms. The protein is Plasmanylethanolamine desaturase 1 of Mus musculus (Mouse).